Here is a 105-residue protein sequence, read N- to C-terminus: Imizoquin biosynthesis cluster protein I (105 aa).

Positions 1–15 are enriched in polar residues; sequence MSSGEPTTMTPSPSE. The interval 1–43 is disordered; that stretch reads MSSGEPTTMTPSPSERTPLLSNGSGGAADDGGTTVTISKPNDG.

It participates in secondary metabolite biosynthesis. Functionally, part of the gene cluster that mediates the biosynthesis of imizoquins A to D, tripeptide-derived alkaloids that serve a protective role against oxidative stress that are essential for normal germination. ImqB is a canonical three-module NRPS that assembles the tripeptide backbone of the imizoquins via condensation of Trp, Tyr, and Leu-derived precursors. N-methylation by imqF and phenol oxidation by imqC, followed by cyclization via the FAD-dependent oxidase imqH carry out the three-step transformation of L-tyrosine into tetrahydroisoquinoline. Importantly, this sequence requires the presence of a free amine in the tyrosine moiety, indicating that isoquinoline formation occurs prior to peptide bond formation. The imidazolidin-4-one ring of imizoquins could form following additional oxidation of the methyl-derived bridgehead carbon by imqH. Lastly, O-methylation by imqG and leucine hydroxylation by imqE complete biosynthesis of the imizoquins. This is Imizoquin biosynthesis cluster protein I from Aspergillus flavus (strain ATCC 200026 / FGSC A1120 / IAM 13836 / NRRL 3357 / JCM 12722 / SRRC 167).